Reading from the N-terminus, the 85-residue chain is Augerpeptide-s6a (85 aa).

Positions 1 to 20 (MTLTMSTVVFFSLILLTLGL) are cleaved as a signal peptide. The propeptide occupies 21–43 (QPKDKDEGVMGRSRLGKRGLLMR). 3 disulfide bridges follow: cysteine 54-cysteine 65, cysteine 58-cysteine 70, and cysteine 64-cysteine 81.

As to expression, expressed by the venom duct.

It localises to the secreted. The sequence is that of Augerpeptide-s6a from Terebra subulata (Chocolate spotted auger).